A 969-amino-acid chain; its full sequence is MSSNTVAQFATELKMPANVLLEQLRAAGVDLKSVDDAVTDSDKAKLLESLRRAHGATEGKKITLTRRQTSEIRQADATGRSRTIQVEVRKKRVFVKRDPAEPVRAEPAVETAAKPVEPPVAEAPAEPVAAPAAEPQPEQPAQAEAQPEPTPAAQAEPEPQPEPQPEAAPAQAVAEPVEPAKNVSVTETEAEQARPEPVVHAQTELTSQTPAPVAQPSAPAESPKSAKAEPAAAPKTTAKPGEIRRAAAPAAPDRAREEARRAAEAEAAALREMLSRPRKVLRAPEPEPQAGALSGTLHKPAGKPATTAAPKKDAKPGAPGAKKTIKTAEVSSTWSDDSARKKPADNKPAVTTRDGWRAGGKGGRGGRNSRNQHQDRRHEQVQQEFIAREIHVPETISVADLAHKMSVKAAEVIKQLMKLGQMVTINQVLDQETAMIVVQEFGHTAIAAKLDDPEAFLDETAAVTEAEAEPRAPVVTVMGHVDHGKTSLLDYIRRAKVASGEAGGITQHIGAYHVETGRGVVTFLDTPGHEAFTAMRARGAKATDIVILVVAADDGVMPQTREAIHHAKAGGVPLVVAVNKIDKPEANPERVKQELVAEEVVPEEYGGDVPFVPVSAKTGAGIDDLLENVLLQAEILELKAPIEVPAKGLVIEARLDKGRGPVATILVQSGTLKRGDVVLAGASFGRVRAMLDENGKQIQTAGPSIPVEIQGLTEVPAAGDELMVLSDERKAREIALFRQGKFRDVKLARQQAAKLESMFDNLGEGTQTLALIVKTDVQGSQEALVSSLTKLSTDEVRVQVVHAAVGGISESDVNLAIASNAVVIGFNVRAEQSAKKLAETNGIDLRYYNIIYDAVDEVKAAMSGMLAPEKREEVIGLVEVREVYTISRIGTVAGCMVLDGVVRRDSQVRLLRNNVVQWTGHLDSLRRFKDDVKEVKSGFDCGLTLRGNNDLQLGDQLEVFEIKEIARTL.

The segment at 96-377 (KRDPAEPVRA…NSRNQHQDRR (282 aa)) is disordered. 3 stretches are compositionally biased toward low complexity: residues 105–157 (AEPA…QAEP), 167–181 (AAPAQAVAEPVEPAK), and 216–252 (PSAPAESPKSAKAEPAAAPKTTAKPGEIRRAAAPAAP). Residues 253–264 (DRAREEARRAAE) are compositionally biased toward basic and acidic residues. The segment covering 357-366 (RAGGKGGRGG) has biased composition (gly residues). Positions 470–637 (PRAPVVTVMG…NVLLQAEILE (168 aa)) constitute a tr-type G domain. The tract at residues 479–486 (GHVDHGKT) is G1. 479-486 (GHVDHGKT) contacts GTP. Positions 504-508 (GITQH) are G2. The tract at residues 525-528 (DTPG) is G3. GTP contacts are provided by residues 525 to 529 (DTPGH) and 579 to 582 (NKID). The G4 stretch occupies residues 579–582 (NKID). Positions 615–617 (SAK) are G5.

The protein belongs to the TRAFAC class translation factor GTPase superfamily. Classic translation factor GTPase family. IF-2 subfamily.

It localises to the cytoplasm. One of the essential components for the initiation of protein synthesis. Protects formylmethionyl-tRNA from spontaneous hydrolysis and promotes its binding to the 30S ribosomal subunits. Also involved in the hydrolysis of GTP during the formation of the 70S ribosomal complex. The polypeptide is Translation initiation factor IF-2 (Bordetella parapertussis (strain 12822 / ATCC BAA-587 / NCTC 13253)).